The sequence spans 226 residues: ATP-dependent dethiobiotin synthetase BioD (226 aa).

13 to 18 (DVGKTL) is an ATP binding site. T17 is a binding site for Mg(2+). K38 is a catalytic residue. Residues D55, 117–120 (EGAG), 177–178 (NR), 206–208 (PFV), and E213 contribute to the ATP site. 2 residues coordinate Mg(2+): D55 and E117.

Belongs to the dethiobiotin synthetase family. Homodimer. It depends on Mg(2+) as a cofactor.

It localises to the cytoplasm. It carries out the reaction (7R,8S)-7,8-diammoniononanoate + CO2 + ATP = (4R,5S)-dethiobiotin + ADP + phosphate + 3 H(+). Its pathway is cofactor biosynthesis; biotin biosynthesis; biotin from 7,8-diaminononanoate: step 1/2. Functionally, catalyzes a mechanistically unusual reaction, the ATP-dependent insertion of CO2 between the N7 and N8 nitrogen atoms of 7,8-diaminopelargonic acid (DAPA, also called 7,8-diammoniononanoate) to form a ureido ring. This Aeromonas salmonicida (strain A449) protein is ATP-dependent dethiobiotin synthetase BioD.